The sequence spans 199 residues: MKPGCTLFFLLCSALTVTTEAHAQTPDTATTAPYLLAGAPTFDLSISQFREDFNSQNPSLPLNEFRAIDSSPDKANLTRAASKINENLYASTALERGTLKIKSIQMTWLPIQGPEQKAAKAKAQEYMAAVIRTLTPLMTKTQSQKKLQSLLTAGKNKRYYTETEGALRYVVADNGEKGLTFAVEPIKLALSESLEGLNK.

The signal sequence occupies residues Met1 to Ala23.

This is an uncharacterized protein from Escherichia coli (strain K12).